The sequence spans 428 residues: Aspartic protease 10 (428 aa).

A signal peptide spans 1-16; it reads MKTFIALLALLTVVSA. In terms of domain architecture, Peptidase A1 spans 72-425; the sequence is YMVQISLGSP…DMKSGRLGLA (354 aa). D90 is a catalytic residue. 2 N-linked (GlcNAc...) asparagine glycosylation sites follow: N155 and N191. Residue D318 is part of the active site. C353 and C385 are oxidised to a cystine.

This sequence belongs to the peptidase A1 family. Post-translationally, proteolytically cleaved. As to expression, synthesized in the intestine. When secreted in low heme conditions, localizes to neurons near the anterior and posterior regions of the body and in coelomocytes.

The protein localises to the secreted. In terms of biological role, aspartic protease which plays a role in heme homeostasis and mediates inter-organ signaling between the intestine and extra-intestinal tissues when cellular heme levels are low. The polypeptide is Aspartic protease 10 (Caenorhabditis elegans).